A 539-amino-acid chain; its full sequence is GMP synthase [glutamine-hydrolyzing] (539 aa).

The 199-residue stretch at 4-202 (KILILDFGSQ…VLQIAGAKPD (199 aa)) folds into the Glutamine amidotransferase type-1 domain. C81 serves as the catalytic Nucleophile. Residues H176 and E178 contribute to the active site. Residues 203-395 (WIMKNHIEEA…LGLPPEMVYR (193 aa)) form the GMPS ATP-PPase domain. Residue 230-236 (SGGVDSS) coordinates ATP.

Homodimer.

It catalyses the reaction XMP + L-glutamine + ATP + H2O = GMP + L-glutamate + AMP + diphosphate + 2 H(+). It participates in purine metabolism; GMP biosynthesis; GMP from XMP (L-Gln route): step 1/1. Functionally, catalyzes the synthesis of GMP from XMP. This is GMP synthase [glutamine-hydrolyzing] from Burkholderia vietnamiensis (strain G4 / LMG 22486) (Burkholderia cepacia (strain R1808)).